The primary structure comprises 85 residues: Small ribosomal subunit protein bS18c (85 aa).

The protein belongs to the bacterial ribosomal protein bS18 family. As to quaternary structure, part of the 30S ribosomal subunit.

It is found in the plastid. It localises to the chloroplast. The protein is Small ribosomal subunit protein bS18c of Zygnema circumcarinatum (Green alga).